Reading from the N-terminus, the 688-residue chain is Elongation factor G (688 aa).

A tr-type G domain is found at 8 to 282; that stretch reads INFRNFGIMA…AVVDFLPSPV (275 aa). Residues 17-24, 81-85, and 135-138 each bind GTP; these read AHIDAGKT, DTPGH, and NKMD.

It belongs to the TRAFAC class translation factor GTPase superfamily. Classic translation factor GTPase family. EF-G/EF-2 subfamily.

Its subcellular location is the cytoplasm. In terms of biological role, catalyzes the GTP-dependent ribosomal translocation step during translation elongation. During this step, the ribosome changes from the pre-translocational (PRE) to the post-translocational (POST) state as the newly formed A-site-bound peptidyl-tRNA and P-site-bound deacylated tRNA move to the P and E sites, respectively. Catalyzes the coordinated movement of the two tRNA molecules, the mRNA and conformational changes in the ribosome. The chain is Elongation factor G (fusA) from Mycoplasma pneumoniae (strain ATCC 29342 / M129 / Subtype 1) (Mycoplasmoides pneumoniae).